Consider the following 365-residue polypeptide: Chorismate synthase (365 aa).

R48 and R54 together coordinate NADP(+). Residues R131 to S133, N243 to A244, G288, K303 to S307, and R329 each bind FMN.

This sequence belongs to the chorismate synthase family. In terms of assembly, homotetramer. Requires FMNH2 as cofactor.

The enzyme catalyses 5-O-(1-carboxyvinyl)-3-phosphoshikimate = chorismate + phosphate. It participates in metabolic intermediate biosynthesis; chorismate biosynthesis; chorismate from D-erythrose 4-phosphate and phosphoenolpyruvate: step 7/7. Functionally, catalyzes the anti-1,4-elimination of the C-3 phosphate and the C-6 proR hydrogen from 5-enolpyruvylshikimate-3-phosphate (EPSP) to yield chorismate, which is the branch point compound that serves as the starting substrate for the three terminal pathways of aromatic amino acid biosynthesis. This reaction introduces a second double bond into the aromatic ring system. The chain is Chorismate synthase from Rhizobium etli (strain CIAT 652).